A 45-amino-acid chain; its full sequence is Cytochrome b559 subunit beta (45 aa).

The chain crosses the membrane as a helical span at residues Trp20–Ala36. His24 contributes to the heme binding site.

Belongs to the PsbE/PsbF family. As to quaternary structure, heterodimer of an alpha subunit and a beta subunit. PSII is composed of 1 copy each of membrane proteins PsbA, PsbB, PsbC, PsbD, PsbE, PsbF, PsbH, PsbI, PsbJ, PsbK, PsbL, PsbM, PsbT, PsbX, PsbY, PsbZ, Psb30/Ycf12, peripheral proteins PsbO, CyanoQ (PsbQ), PsbU, PsbV and a large number of cofactors. It forms dimeric complexes. Heme b serves as cofactor.

The protein localises to the cellular thylakoid membrane. This b-type cytochrome is tightly associated with the reaction center of photosystem II (PSII). PSII is a light-driven water:plastoquinone oxidoreductase that uses light energy to abstract electrons from H(2)O, generating O(2) and a proton gradient subsequently used for ATP formation. It consists of a core antenna complex that captures photons, and an electron transfer chain that converts photonic excitation into a charge separation. The polypeptide is Cytochrome b559 subunit beta (Parasynechococcus marenigrum (strain WH8102)).